The primary structure comprises 343 residues: Ferredoxin--NADP reductase (343 aa).

8 residues coordinate FAD: Cys-18, Asp-37, Gln-45, Tyr-50, Val-90, Phe-125, Asp-290, and Thr-331.

It belongs to the ferredoxin--NADP reductase type 2 family. In terms of assembly, homodimer. The cofactor is FAD.

It catalyses the reaction 2 reduced [2Fe-2S]-[ferredoxin] + NADP(+) + H(+) = 2 oxidized [2Fe-2S]-[ferredoxin] + NADPH. This chain is Ferredoxin--NADP reductase, found in Parvibaculum lavamentivorans (strain DS-1 / DSM 13023 / NCIMB 13966).